We begin with the raw amino-acid sequence, 77 residues long: Ras-related C3 botulinum toxin substrate 1 (77 aa).

22 to 24 (KLD) serves as a coordination point for GTP. Residue K53 forms a Glycyl lysine isopeptide (Lys-Gly) (interchain with G-Cter in ubiquitin) linkage. 65–66 (AL) serves as a coordination point for GTP.

It belongs to the small GTPase superfamily. Rho family. In terms of assembly, interacts with NISCH. Interacts with PIP5K1A. Interacts with the GTP-bound form of RAB7A. Interacts with SRGAP2. Interacts with CYFIP1/SRA-1. Interacts with PLXNB3. Interacts with ARHGDIA; the interaction is induced by SEMA5A, mediated through PLXNB3 and inactivates and stabilizes RAC1. Interacts (GTP-bound form preferentially) with PKN2 (via the REM repeats); the interaction stimulates autophosphorylation and phosphorylation of PKN2. Interacts with the GEF proteins PREX1, RASGRF2, FARP1, FARP2, DOCK1, DOCK2 and DOCK7, which promote the exchange between GDP and GTP, and therefore activate it. Interacts with PARD6A, PARD6B and PARD6G in a GTP-dependent manner. Part of a quaternary complex containing PARD3, some PARD6 protein (PARD6A, PARD6B or PARD6G) and some atypical PKC protein (PRKCI or PRKCZ), which plays a central role in epithelial cell polarization. Found in a trimeric complex composed of DOCK1 and ELMO1, which plays a central role in phagocytosis of apoptotic cells. Interacts with RALBP1 via its effector domain. Interacts with PLXNB1. Part of a complex with MAP2K3, MAP3K3, CCM2 and DEF6. Interacts with BAIAP2, BAIAP2L1 and DEF6. Interacts with Y.pseudotuberculosis YPKA and PLCB2. Interacts with NOXA1. Interacts with ARHGEF2. Interacts with TBC1D2. Interacts with UNKL. Interacts with USP6. Interacts with SPATA13. Interacts with ARHGEF16; mediates activation of RAC1 by EPHA2. Interacts with ITGB4. Interacts with S100A8 and calprotectin (S100A8/9). Interacts with PACSIN2. Interacts (when active) with PPP5C (via TPR repeats); activates PPP5C phosphatase activity and translocates PPP5C to the cell membrane. Interacts with RAPH1 (via Ras associating and PH domains). Interacts with MTSS2 (via IMD domain); this interaction may be important to potentiate PDGF-induced RAC1 activation. Interacts with PAK2. Interacts (GTP-bound form) with SH3RF1 and SH3RF3. Found in a complex with SH3RF1, MAPK8IP1/JIP1, MAP3K11/MLK3, MAP2K7/MKK7 and MAPK8/JNK1. Interacts (both active GTP- or inactive GDP-bound forms) with SH3RF2. Interacts (GTP-bound form preferentially) with CYRIB. Interacts with DOCK4 (via DOCKER domain); functions as a guanine nucleotide exchange factor (GEF) for RAC1. Interacts with GARRE1. Interacts with RAP1GDS1. May interact with ARHGAP36. Interacts with DSG3; the interaction is required for DSG3 translocation to cell-cell junctions, organization of cortical F-actin bundles and actin anchoring at cell-cell junctions. Component of the phagocyte NADPH oxidase complex composed of an obligatory core heterodimer formed by the membrane proteins CYBA and CYBB and the cytosolic regulatory subunits NCF1/p47-phox, NCF2/p67-phox, NCF4/p40-phox and the small GTPase RAC1 or RAC2. Interacts with NCF2. The N-terminus is blocked. Post-translationally, GTP-bound active form is ubiquitinated by HACE1, leading to its degradation by the proteasome.

It is found in the cytoplasm. The protein localises to the membrane. The protein resides in the melanosome. It localises to the cell projection. Its subcellular location is the lamellipodium. It is found in the dendrite. The protein localises to the synapse. The protein resides in the nucleus. It carries out the reaction GTP + H2O = GDP + phosphate + H(+). Regulated by guanine nucleotide exchange factors (GEFs) which promote the exchange of bound GDP for free GTP, GTPase activating proteins (GAPs) which increase the GTP hydrolysis activity, and GDP dissociation inhibitors which inhibit the dissociation of the nucleotide from the GTPase. GTP hydrolysis is stimulated by ARHGAP30. Its function is as follows. Plasma membrane-associated small GTPase which cycles between active GTP-bound and inactive GDP-bound states. In its active state, binds to a variety of effector proteins to regulate cellular responses such as secretory processes, phagocytosis of apoptotic cells, epithelial cell polarization, neurons adhesion, migration and differentiation, and growth-factor induced formation of membrane ruffles. Rac1 p21/rho GDI heterodimer is the active component of the cytosolic factor sigma 1, which is involved in stimulation of the NADPH oxidase activity in macrophages. Essential for the SPATA13-mediated regulation of cell migration and adhesion assembly and disassembly. Stimulates PKN2 kinase activity. In concert with RAB7A, plays a role in regulating the formation of RBs (ruffled borders) in osteoclasts. In podocytes, promotes nuclear shuttling of NR3C2; this modulation is required for a proper kidney functioning. Required for atypical chemokine receptor ACKR2-induced LIMK1-PAK1-dependent phosphorylation of cofilin (CFL1) and for up-regulation of ACKR2 from endosomal compartment to cell membrane, increasing its efficiency in chemokine uptake and degradation. In neurons, is involved in dendritic spine formation and synaptic plasticity. In hippocampal neurons, involved in spine morphogenesis and synapse formation, through local activation at synapses by guanine nucleotide exchange factors (GEFs), such as ARHGEF6/ARHGEF7/PIX. In synapses, seems to mediate the regulation of F-actin cluster formation performed by SHANK3. In neurons, plays a crucial role in regulating GABA(A) receptor synaptic stability and hence GABAergic inhibitory synaptic transmission through its role in PAK1 activation and eventually F-actin stabilization. Required for DSG3 translocation to cell-cell junctions, DSG3-mediated organization of cortical F-actin bundles and anchoring of actin at cell junctions; via interaction with DSG3. Subunit of the phagocyte NADPH oxidase complex that mediates the transfer of electrons from cytosolic NADPH to O2 to produce the superoxide anion (O2(-)). The sequence is that of Ras-related C3 botulinum toxin substrate 1 from Cavia porcellus (Guinea pig).